The sequence spans 361 residues: Spermidine/putrescine import ATP-binding protein PotA (361 aa).

Residues 4–234 form the ABC transporter domain; it reads LELRDVTRRF…PANRFIADFI (231 aa). 36–43 lines the ATP pocket; sequence GPSGCGKT.

Belongs to the ABC transporter superfamily. Spermidine/putrescine importer (TC 3.A.1.11.1) family. In terms of assembly, the complex is composed of two ATP-binding proteins (PotA), two transmembrane proteins (PotB and PotC) and a solute-binding protein (PotD).

The protein resides in the cell inner membrane. It catalyses the reaction ATP + H2O + polyamine-[polyamine-binding protein]Side 1 = ADP + phosphate + polyamineSide 2 + [polyamine-binding protein]Side 1.. Functionally, part of the ABC transporter complex PotABCD involved in spermidine/putrescine import. Responsible for energy coupling to the transport system. The polypeptide is Spermidine/putrescine import ATP-binding protein PotA (Nitrosomonas europaea (strain ATCC 19718 / CIP 103999 / KCTC 2705 / NBRC 14298)).